The sequence spans 447 residues: Tubulin beta-2 chain (447 aa).

Positions 9, 67, 136, 140, 141, 142, 202, and 224 each coordinate GTP. E67 provides a ligand contact to Mg(2+). Residues 411–425 (SNMNDLVSEYQQYQD) are compositionally biased toward polar residues. Positions 411 to 447 (SNMNDLVSEYQQYQDATAEEDEYEEEEEDYHQEHDEM) are disordered. Residues 427 to 440 (TAEEDEYEEEEEDY) show a composition bias toward acidic residues.

Belongs to the tubulin family. In terms of assembly, dimer of alpha and beta chains. A typical microtubule is a hollow water-filled tube with an outer diameter of 25 nm and an inner diameter of 15 nM. Alpha-beta heterodimers associate head-to-tail to form protofilaments running lengthwise along the microtubule wall with the beta-tubulin subunit facing the microtubule plus end conferring a structural polarity. Microtubules usually have 13 protofilaments but different protofilament numbers can be found in some organisms and specialized cells. The cofactor is Mg(2+).

The protein localises to the cytoplasm. Its subcellular location is the cytoskeleton. Its function is as follows. Tubulin is the major constituent of microtubules, a cylinder consisting of laterally associated linear protofilaments composed of alpha- and beta-tubulin heterodimers. Microtubules grow by the addition of GTP-tubulin dimers to the microtubule end, where a stabilizing cap forms. Below the cap, tubulin dimers are in GDP-bound state, owing to GTPase activity of alpha-tubulin. In Pisum sativum (Garden pea), this protein is Tubulin beta-2 chain (TUBB2).